Consider the following 543-residue polypeptide: Allantoate permease (543 aa).

At 1–80 (MSADASTNSN…PEEDRKLRWK (80 aa)) the chain is on the cytoplasmic side. A helical membrane pass occupies residues 81–97 (IDYCMFPLMCILYAVQF). At 98 to 123 (MDKISTSSAAVMGLRTDLKMHGDQYS) the chain is on the extracellular side. A helical transmembrane segment spans residues 124–145 (WVTSAFYFGYLFMNLGPVQFIF). Residues 146-154 (QRTSHMSKM) are Cytoplasmic-facing. The chain crosses the membrane as a helical span at residues 155–171 (LAVFIVIWGMLLALHAA). Over 172 to 178 (PTVKYPS) the chain is Extracellular. The chain crosses the membrane as a helical span at residues 179–200 (FIVLRVLLGCAESVVTPCFTII). Over 201–213 (TAQYWKTEEQFTR) the chain is Cytoplasmic. A helical membrane pass occupies residues 214-237 (VSIWFGMNGLGSILINAIAYGVYI). At 238–248 (HQDSYAIKGWR) the chain is on the extracellular side. A helical transmembrane segment spans residues 249 to 269 (TLFVITGVITIFIGILIFLWI). At 270–317 (PDDPSKARFLSKREKLMVVQRIRSNQQGFGNHEIKKYQIIEALKDVRT) the chain is on the cytoplasmic side. The helical transmembrane segment at 318–342 (WLYFLFTVSSNIPNGGISSFMSILL) threads the bilayer. Residues 343–352 (NSDFGYSSKE) are Extracellular-facing. A helical transmembrane segment spans residues 353 to 377 (TLLMGLPTGAVELVGCPLFGILAVY). The Cytoplasmic portion of the chain corresponds to 378-389 (AANKKIPFWKYK). The helical transmembrane segment at 390–411 (LSWAIFAAVLALIASCMLGFAT) threads the bilayer. At 412-417 (NSKKAR) the chain is on the extracellular side. The helical transmembrane segment at 418 to 435 (LAGAYLWYISPVSFICVL) threads the bilayer. Residues 436-453 (SNISANSSGYSKKWTVSS) are Cytoplasmic-facing. The chain crosses the membrane as a helical span at residues 454–472 (INLVAYAAANLAGPQTFIA). The Extracellular portion of the chain corresponds to 473-482 (KQAPKYHGAK). The helical transmembrane segment at 483–504 (VAMVVCYAVMIVLLSILLIVNL) threads the bilayer. Residues 505 to 543 (RENKRRDKIAAERGFPEETENLEFSDLTDFENPNFRYTL) lie on the Cytoplasmic side of the membrane.

It belongs to the major facilitator superfamily. Allantoate permease family.

The protein resides in the membrane. Its function is as follows. Component of the allantoate transport system. The protein is Allantoate permease (DAL5) of Saccharomyces cerevisiae (strain ATCC 204508 / S288c) (Baker's yeast).